We begin with the raw amino-acid sequence, 248 residues long: Chromatin target of PRMT1 protein (248 aa).

Alanine 2 is modified (N-acetylalanine). Threonine 33 is subject to Phosphothreonine. Phosphoserine occurs at positions 40, 49, and 64. Lysine 70 participates in a covalent cross-link: Glycyl lysine isopeptide (Lys-Gly) (interchain with G-Cter in SUMO2). The tract at residues 151–204 (LRRGGVRGRGGPGRGGLGRGAMGRGGIGGRGRGMIGRGRGGFGGRGRGRGRGRG) is disordered. The tract at residues 153-206 (RGGVRGRGGPGRGGLGRGAMGRGGIGGRGRGMIGRGRGGFGGRGRGRGRGRGAL) is interaction with PRMT1. Gly residues predominate over residues 157–195 (RGRGGPGRGGLGRGAMGRGGIGGRGRGMIGRGRGGFGGR). Residues 194–203 (GRGRGRGRGR) carry the GAR motif; involved in 5hmC binding motif. Threonine 242 carries the phosphothreonine modification.

In terms of assembly, interacts with PRMT1 and PRMT5. Interacts with the 5FMC complex; the interaction is methylation-dependent. Interacts with FYTTD1, SET and PRC1 complex members CBX4, RNF2 and PHC2; the interactions are methylation-independent. Interacts with ZNF148. Component of the transcription/export (TREX) complex at least composed of ALYREF/THOC4, DDX39B, SARNP/CIP29, CHTOP and the THO subcomplex; TREX seems to have dynamic structure involving ATP-dependent remodeling; in the complex interacts (methylated) with ALYREF/THOC4 and with DDX39B in a methylation-independent manner. Interacts (methylated) with NXF1; the interaction is mutually exclusive with the NXF1:THOC5 interaction. Interacts with WDR77 and ERH. In terms of processing, asymmetrically methylated by PRMT1. Symmetrically methylated by PRMT5. As to expression, expressed in an erythroid progenitor cell line derived from peripheral blood. Expressed in glioblastoma cells.

The protein localises to the nucleus. It localises to the nucleolus. Its subcellular location is the nucleoplasm. The protein resides in the nucleus speckle. Functionally, plays an important role in the ligand-dependent activation of estrogen receptor target genes. May play a role in the silencing of fetal globin genes. Recruits the 5FMC complex to ZNF148, leading to desumoylation of ZNF148 and subsequent transactivation of ZNF148 target genes. Plays an important role in the tumorigenicity of glioblastoma cells. Binds to 5-hydroxymethylcytosine (5hmC) and associates with the methylosome complex containing PRMT1, PRMT5, MEP50 and ERH. The CHTOP-methylosome complex associated with 5hmC is recruited to selective sites on the chromosome, where it methylates H4R3 and activates the transcription of genes involved in glioblastomagenesis. In terms of biological role, required for effective mRNA nuclear export and is a component of the TREX complex which is thought to couple mRNA transcription, processing and nuclear export, and specifically associates with spliced mRNA and not with unspliced pre-mRNA. TREX is recruited to spliced mRNAs by a transcription-independent mechanism, binds to mRNA upstream of the exon-junction complex (EJC) and is recruited in a splicing- and cap-dependent manner to a region near the 5' end of the mRNA where it functions in mRNA export to the cytoplasm via the TAP/NFX1 pathway. The TREX complex is essential for the export of Kaposi's sarcoma-associated herpesvirus (KSHV) intronless mRNAs and infectious virus production. Stimulates DDX39B ATPase and helicase activities. In cooperation with ALYREF/THOC4 enhances NXF1 RNA binding activity. The chain is Chromatin target of PRMT1 protein (CHTOP) from Homo sapiens (Human).